Consider the following 1069-residue polypeptide: DNA annealing helicase and endonuclease ZRANB3 (1069 aa).

Residues 46–208 (VFALRRDGRC…FMQIEALFPQ (163 aa)) form the Helicase ATP-binding domain. A DNA annealing helicase activity region spans residues 46-481 (VFALRRDGRC…GRKEKLQATE (436 aa)). ATP is bound at residue 59–66 (DEMGLGKT). The DEAH box signature appears at 157–160 (DESH). One can recognise a Helicase C-terminal domain in the interval 325-485 (AVKDYIKMLL…KLQATEDDKE (161 aa)). The PIP-box motif lies at 518-525 (QHDIRSFF). The segment at 617-646 (PEKGWQCGFCTFLNNPGLPYCEMCENPRSR) adopts a RanBP2-type zinc-finger fold. Residues 648–720 (AGRNHLQDNN…PEIGQLNNSG (73 aa)) form a disordered region. Composition is skewed to basic and acidic residues over residues 652 to 661 (HLQDNNKNDE) and 677 to 707 (ECER…EDRL). The HNH domain occupies 1001–1041 (PGEGHFWQVDHIRPVYEGGGQCSLDNLQTLCTVCHKERTAQ). Positions 1001 to 1069 (PGEGHFWQVD…SDITRFLVKK (69 aa)) are endonuclease activity. The APIM motif motif lies at 1064 to 1068 (RFLVK).

It belongs to the SNF2/RAD54 helicase family. As to quaternary structure, interacts (via PIP-box and RanBP2-type zinc finger) with PCNA (when PCNA is polyubiquitinated via 'Lys-63'-linked polyubiquitin).

Its subcellular location is the nucleus. The protein localises to the chromosome. Functionally, DNA annealing helicase and endonuclease required to maintain genome stability at stalled or collapsed replication forks by facilitating fork restart and limiting inappropriate recombination that could occur during template switching events. Recruited to the sites of stalled DNA replication by polyubiquitinated PCNA and acts as a structure-specific endonuclease that cleaves the replication fork D-loop intermediate, generating an accessible 3'-OH group in the template of the leading strand, which is amenable to extension by DNA polymerase. In addition to endonuclease activity, also catalyzes the fork regression via annealing helicase activity in order to prevent disintegration of the replication fork and the formation of double-strand breaks. In Mus musculus (Mouse), this protein is DNA annealing helicase and endonuclease ZRANB3 (Zranb3).